Consider the following 123-residue polypeptide: Small ribosomal subunit protein uS12 (123 aa).

Position 89 is a 3-methylthioaspartic acid (Asp-89).

It belongs to the universal ribosomal protein uS12 family. Part of the 30S ribosomal subunit. Contacts proteins S8 and S17. May interact with IF1 in the 30S initiation complex.

Functionally, with S4 and S5 plays an important role in translational accuracy. Interacts with and stabilizes bases of the 16S rRNA that are involved in tRNA selection in the A site and with the mRNA backbone. Located at the interface of the 30S and 50S subunits, it traverses the body of the 30S subunit contacting proteins on the other side and probably holding the rRNA structure together. The combined cluster of proteins S8, S12 and S17 appears to hold together the shoulder and platform of the 30S subunit. The chain is Small ribosomal subunit protein uS12 from Citrifermentans bemidjiense (strain ATCC BAA-1014 / DSM 16622 / JCM 12645 / Bem) (Geobacter bemidjiensis).